The primary structure comprises 1140 residues: GPI inositol-deacylase (1140 aa).

The tract at residues 1-84 is disordered; sequence MHRRSSGSSP…TTWASHDPPR (84 aa). Over residues 55–78 the composition is skewed to polar residues; it reads GKSTPRSRNSSTWRTLSSATTTWA. A glycan (N-linked (GlcNAc...) asparagine) is linked at Asn-63. A helical membrane pass occupies residues 117 to 137; that stretch reads SCSILTALTTILACVFLFSIV. Ser-304 is an active-site residue. The chain crosses the membrane as a helical span at residues 782-802; it reads LVMRYRTVFAAFPLLVVSLTL. Asn-862 carries an N-linked (GlcNAc...) asparagine glycan. 7 helical membrane passes run 882–902, 905–925, 952–972, 1002–1022, 1039–1059, 1070–1090, and 1094–1114; these read AFFW…CVLL, VALI…SKSG, VLLV…VACI, SVFI…LVWA, VLSI…SMIP, SVLL…YAYI, and LVNI…GFSL.

Belongs to the GPI inositol-deacylase family.

It is found in the endoplasmic reticulum membrane. Its function is as follows. Involved in inositol deacylation of GPI-anchored proteins which plays important roles in the quality control and ER-associated degradation of GPI-anchored proteins. The protein is GPI inositol-deacylase (bst1) of Emericella nidulans (strain FGSC A4 / ATCC 38163 / CBS 112.46 / NRRL 194 / M139) (Aspergillus nidulans).